We begin with the raw amino-acid sequence, 253 residues long: Phosphate import ATP-binding protein PstB 1 (253 aa).

Residues 7–248 (LTVSDLSLYY…PEKQETSDYI (242 aa)) enclose the ABC transporter domain. ATP is bound at residue 39-46 (GPSGCGKS).

This sequence belongs to the ABC transporter superfamily. Phosphate importer (TC 3.A.1.7) family. The complex is composed of two ATP-binding proteins (PstB), two transmembrane proteins (PstC and PstA) and a solute-binding protein (PstS).

It is found in the cell membrane. The catalysed reaction is phosphate(out) + ATP + H2O = ADP + 2 phosphate(in) + H(+). Part of the ABC transporter complex PstSACB involved in phosphate import. Responsible for energy coupling to the transport system. The sequence is that of Phosphate import ATP-binding protein PstB 1 from Lactococcus lactis subsp. lactis (strain IL1403) (Streptococcus lactis).